The sequence spans 103 residues: GP16 protein (103 aa).

In Orgyia pseudotsugata multicapsid polyhedrosis virus (OpMNPV), this protein is GP16 protein (GP16).